The sequence spans 92 residues: Small ribosomal subunit protein uS19c (92 aa).

Belongs to the universal ribosomal protein uS19 family.

Its subcellular location is the plastid. It is found in the chloroplast. In terms of biological role, protein S19 forms a complex with S13 that binds strongly to the 16S ribosomal RNA. In Cucumis sativus (Cucumber), this protein is Small ribosomal subunit protein uS19c.